A 100-amino-acid polypeptide reads, in one-letter code: Integration host factor subunit alpha (100 aa).

Residues 54-73 (DLRDKRQRPGRNPKTGEEIP) form a disordered region.

The protein belongs to the bacterial histone-like protein family. As to quaternary structure, heterodimer of an alpha and a beta chain.

In terms of biological role, this protein is one of the two subunits of integration host factor, a specific DNA-binding protein that functions in genetic recombination as well as in transcriptional and translational control. The polypeptide is Integration host factor subunit alpha (Pseudomonas savastanoi pv. phaseolicola (strain 1448A / Race 6) (Pseudomonas syringae pv. phaseolicola (strain 1448A / Race 6))).